A 249-amino-acid chain; its full sequence is General transcription factor IIF subunit 2 (249 aa).

The residue at position 2 (Ala-2) is an N-acetylalanine. N6-acetyllysine occurs at positions 22, 33, and 137. Ser-142 is modified (phosphoserine). DNA is bound by residues Gly-227 and His-229. The residue at position 248 (Ser-248) is a Phosphoserine.

This sequence belongs to the TFIIF beta subunit family. Heterodimer of an alpha and a beta subunit. Interacts with HTATSF1 and GPBP1. Interacts with URI1. Interacts with GTF2B (via N-terminus); this interaction is inhibited in presence of GTF2F1. Part of TBP-based Pol II pre-initiation complex (PIC), in which Pol II core assembles with general transcription factors and other specific initiation factors including GTF2E1, GTF2E2, GTF2F1, GTF2F2, TCEA1, ERCC2, ERCC3, GTF2H2, GTF2H3, GTF2H4, GTF2H5, GTF2A1, GTF2A2, GTF2B and TBP; this large multi-subunit PIC complex mediates DNA unwinding and targets Pol II core to the transcription start site where the first phosphodiester bond forms.

The protein resides in the nucleus. TFIIF is a general transcription initiation factor that binds to RNA polymerase II and helps to recruit it to the initiation complex in collaboration with TFIIB. The protein is General transcription factor IIF subunit 2 (GTF2F2) of Bos taurus (Bovine).